The sequence spans 384 residues: MAVTVSTNVSAMTAQRYLNKATNELNTSMERLSSGHKINSAKDDAAGLQISNRLTAQSRGLDVAMRNANDGISIAQTAEGAMNEATSVMQRMRDLAIQSSNGTNSPAERQAINEESMALVDELNRIAETTSFGGRRLLNGSFGEAAFQIGASSGEAMIMGLTSIRADDTRMGGVTFFSEVGKGKDWGVDPTKADLKITLPGMGEDEDGNVDDLEININAKAGDDIEELATYINGQSDMINASVSEDGKLQIFVAHPNVQGDISISGGLASELGLSDEPVRTSVQDIDMTTVQGSQNAISVLDSALKYVDSQRADLGAKQNRLSHSINNLANIQENVDASNSRIKDTDFAKETTQMTKAQILQQAGTSILAQAKQLPNSAMSLLQ.

Positions 317-347 (AKQNRLSHSINNLANIQENVDASNSRIKDTD) form a coiled coil.

The protein belongs to the bacterial flagellin family. Heteromer of multiple flagellin subunits including FlaA, FlaB/D, FlaC, FlaE and FlaF. Homomer of FlaC is not able to form a functional filament.

It localises to the secreted. Its subcellular location is the bacterial flagellum. Its function is as follows. Flagellin is the subunit protein which polymerizes to form the filaments of bacterial flagella. FlaC is not essential for polar flagellar synthesis and swimming motility. Homomer of FlaC is not able to form a functional filament. This is Polar flagellin C (flaC) from Vibrio parahaemolyticus serotype O3:K6 (strain RIMD 2210633).